The following is a 299-amino-acid chain: MTTTNRLRIALQKKGRLSKDCNELLKQCGVKINWNEQRLIAYAENMPIEILRVRDDDIPGLVFEGVVDLGIIGENVLEEEELGRLARGEKIEYKKLRTLDFGGCRLSLAIDRDRTYNGVQDFVNSRIATSYPNLLKRYMNEKGVAFKSTLLNGSVEVAPSAGLADAICDLVSSGATLEANGLKEVEVIYQSKACLIQRAEPLSTEKQALVDRLLTRIQGVQQAAESKYIMLHAPKDKLKEITALLPGVENPTILPLANDSARVAMHVVSQENLFWETMEQLKEMGASSVLVLPIEKMLA.

This sequence belongs to the ATP phosphoribosyltransferase family. Long subfamily. Mg(2+) serves as cofactor.

It localises to the cytoplasm. It catalyses the reaction 1-(5-phospho-beta-D-ribosyl)-ATP + diphosphate = 5-phospho-alpha-D-ribose 1-diphosphate + ATP. It participates in amino-acid biosynthesis; L-histidine biosynthesis; L-histidine from 5-phospho-alpha-D-ribose 1-diphosphate: step 1/9. Feedback inhibited by histidine. In terms of biological role, catalyzes the condensation of ATP and 5-phosphoribose 1-diphosphate to form N'-(5'-phosphoribosyl)-ATP (PR-ATP). Has a crucial role in the pathway because the rate of histidine biosynthesis seems to be controlled primarily by regulation of HisG enzymatic activity. This chain is ATP phosphoribosyltransferase, found in Actinobacillus pleuropneumoniae serotype 5b (strain L20).